The chain runs to 372 residues: Chaperone protein DnaJ (372 aa).

The 65-residue stretch at 5–69 (DYYEVLGVSK…DKRKQYDQFG (65 aa)) folds into the J domain. Residues 139-221 (GVDKIIELDL…CKGKGKYLER (83 aa)) form a CR-type zinc finger. The Zn(2+) site is built by Cys-152, Cys-155, Cys-169, Cys-172, Cys-195, Cys-198, Cys-209, and Cys-212. CXXCXGXG motif repeat units lie at residues 152-159 (CSVCFGSG), 169-176 (CNNCHGTG), 195-202 (CNVCNGAG), and 209-216 (CKNCKGKG).

The protein belongs to the DnaJ family. In terms of assembly, homodimer. Zn(2+) serves as cofactor.

It is found in the cytoplasm. Participates actively in the response to hyperosmotic and heat shock by preventing the aggregation of stress-denatured proteins and by disaggregating proteins, also in an autonomous, DnaK-independent fashion. Unfolded proteins bind initially to DnaJ; upon interaction with the DnaJ-bound protein, DnaK hydrolyzes its bound ATP, resulting in the formation of a stable complex. GrpE releases ADP from DnaK; ATP binding to DnaK triggers the release of the substrate protein, thus completing the reaction cycle. Several rounds of ATP-dependent interactions between DnaJ, DnaK and GrpE are required for fully efficient folding. Also involved, together with DnaK and GrpE, in the DNA replication of plasmids through activation of initiation proteins. This chain is Chaperone protein DnaJ, found in Mycoplasma mycoides subsp. mycoides SC (strain CCUG 32753 / NCTC 10114 / PG1).